The following is a 317-amino-acid chain: MLGQSNYLALVGGGRQPKFPQNKLVIWDDAKQKVVITLEFRTSVLGVRLSKSRIVVALLNSIHTFVFSSPPKKLAVFETTDNPLGLACLGQKVLAFPGRSPGQVQLVELETGNVSIIPAHSTPLRAMALSPDGEVLATASEAGTLVRIFATSNCAKMAELRRGVDHAIIFSLAISPSNNLLAVTSDKSTLHVFNLPHPRNAPYSNQQASSSDDGVNKKWGILGKIPLLPRVFSDVYSFASAHFELGEEEPGPTYAPPLGTVLGRPPKGVIGWSNDNTILVVGSGSDGRWEKFVLRDDEEGKKHCIREGWKKYLGSGS.

WD repeat units lie at residues 119-159 (AHST…KMAE) and 164-203 (VDHAIIFSLAISPSNNLLAVTSDKSTLHVFNLPHPRNAPY).

Belongs to the WD repeat PROPPIN family.

The protein localises to the vacuole membrane. Its subcellular location is the cytoplasmic vesicle membrane. Its function is as follows. Involved in mitochondrial or peroxisomal functions and amino acid signaling pathways. The chain is SVP1-like protein 2 (hsv2) from Emericella nidulans (strain FGSC A4 / ATCC 38163 / CBS 112.46 / NRRL 194 / M139) (Aspergillus nidulans).